A 209-amino-acid polypeptide reads, in one-letter code: J domain-containing protein spf31 (209 aa).

One can recognise a J domain in the interval 31 to 96 (NAYDVLDILP…KIRESLDSAY (66 aa)). Disordered regions lie at residues 149–175 (ANQQREQARQDEIARERKRRVESEKVW) and 187–209 (QDFLHKTKKNNLKKKNKKPRVLG). Basic and acidic residues predominate over residues 154–175 (EQARQDEIARERKRRVESEKVW). Over residues 192–209 (KTKKNNLKKKNKKPRVLG) the composition is skewed to basic residues.

This chain is J domain-containing protein spf31 (spf31), found in Schizosaccharomyces pombe (strain 972 / ATCC 24843) (Fission yeast).